A 355-amino-acid chain; its full sequence is uncharacterized protein (355 aa).

In terms of domain architecture, J spans 9–75; it reads DYYDILNISV…KLREKYDKLG (67 aa).

It belongs to the DnaJ family.

It is found in the cytoplasm. This is an uncharacterized protein from Schizosaccharomyces pombe (strain 972 / ATCC 24843) (Fission yeast).